The following is a 170-amino-acid chain: Large ribosomal subunit protein uL10 (170 aa).

Belongs to the universal ribosomal protein uL10 family. Part of the ribosomal stalk of the 50S ribosomal subunit. The N-terminus interacts with L11 and the large rRNA to form the base of the stalk. The C-terminus forms an elongated spine to which L12 dimers bind in a sequential fashion forming a multimeric L10(L12)X complex.

Functionally, forms part of the ribosomal stalk, playing a central role in the interaction of the ribosome with GTP-bound translation factors. The chain is Large ribosomal subunit protein uL10 (rplJ) from Chlamydia pneumoniae (Chlamydophila pneumoniae).